We begin with the raw amino-acid sequence, 206 residues long: Large ribosomal subunit protein uL4 (206 aa).

Over residues Asn-43 to Lys-52 the composition is skewed to polar residues. The interval Asn-43 to Gly-86 is disordered.

The protein belongs to the universal ribosomal protein uL4 family. In terms of assembly, part of the 50S ribosomal subunit.

One of the primary rRNA binding proteins, this protein initially binds near the 5'-end of the 23S rRNA. It is important during the early stages of 50S assembly. It makes multiple contacts with different domains of the 23S rRNA in the assembled 50S subunit and ribosome. Functionally, forms part of the polypeptide exit tunnel. The sequence is that of Large ribosomal subunit protein uL4 from Lachnoclostridium phytofermentans (strain ATCC 700394 / DSM 18823 / ISDg) (Clostridium phytofermentans).